The sequence spans 108 residues: MTEATLAEWHPLGAIDEFTEDEPAARVAGQKPIAVFRIGDELFAMHDLCSHGHARLSEGYVEDGCVECPLHQGLIDIRTGAPKCAPITEPVRVYPIRIVDGQVEVNVG.

The region spanning 9-105 (WHPLGAIDEF…IRIVDGQVEV (97 aa)) is the Rieske domain. [2Fe-2S] cluster is bound by residues Cys-49, His-51, Cys-68, and His-71.

It belongs to the bacterial ring-hydroxylating dioxygenase ferredoxin component family. Part of a multicomponent enzyme system composed of a reductase (AndAa), a ferredoxin (AndAb) and a two-subunit oxygenase component (AndAc and AndAd). [2Fe-2S] cluster is required as a cofactor.

It participates in aromatic compound metabolism; anthranilate degradation via hydroxylation; catechol from anthranilate: step 1/1. Part of the multicomponent anthranilate dioxygenase, that converts anthranilate to catechol. This protein seems to be a 2Fe-2S ferredoxin. The protein is Anthranilate 1,2-dioxygenase ferredoxin subunit of Burkholderia cepacia (Pseudomonas cepacia).